The sequence spans 141 residues: Nucleoside triphosphatase NudI (141 aa).

The Nudix hydrolase domain maps to 1 to 141; it reads MRQRTIVCPL…RKTLRLKGLL (141 aa). Residues 38-59 carry the Nudix box motif; it reads GGVESGERIEEALRREIREELG.

The protein belongs to the Nudix hydrolase family. NudI subfamily. Monomer. Requires Mg(2+) as cofactor.

The enzyme catalyses a ribonucleoside 5'-triphosphate + H2O = a ribonucleoside 5'-phosphate + diphosphate + H(+). It catalyses the reaction a 2'-deoxyribonucleoside 5'-triphosphate + H2O = a 2'-deoxyribonucleoside 5'-phosphate + diphosphate + H(+). It carries out the reaction dUTP + H2O = dUMP + diphosphate + H(+). The catalysed reaction is dTTP + H2O = dTMP + diphosphate + H(+). The enzyme catalyses dCTP + H2O = dCMP + diphosphate + H(+). Catalyzes the hydrolysis of nucleoside triphosphates, with a preference for pyrimidine deoxynucleoside triphosphates (dUTP, dTTP and dCTP). This Shigella flexneri serotype 5b (strain 8401) protein is Nucleoside triphosphatase NudI.